A 434-amino-acid chain; its full sequence is tRNA modification GTPase MnmE (434 aa).

Residues Arg20, Glu79, and Val119 each coordinate (6S)-5-formyl-5,6,7,8-tetrahydrofolate. The region spanning 219 to 361 (GLRVVLAGRP…LQEKLVEIGK (143 aa)) is the TrmE-type G domain. GTP contacts are provided by residues 229 to 234 (NAGKST), 248 to 254 (APIAGTT), and 273 to 276 (DTAG). Mg(2+) is bound by residues Ser233 and Thr254. (6S)-5-formyl-5,6,7,8-tetrahydrofolate is bound at residue Lys434.

Belongs to the TRAFAC class TrmE-Era-EngA-EngB-Septin-like GTPase superfamily. TrmE GTPase family. Homodimer. Heterotetramer of two MnmE and two MnmG subunits. The cofactor is K(+).

It is found in the cytoplasm. In terms of biological role, exhibits a very high intrinsic GTPase hydrolysis rate. Involved in the addition of a carboxymethylaminomethyl (cmnm) group at the wobble position (U34) of certain tRNAs, forming tRNA-cmnm(5)s(2)U34. The protein is tRNA modification GTPase MnmE of Zymomonas mobilis subsp. mobilis (strain ATCC 31821 / ZM4 / CP4).